Consider the following 492-residue polypeptide: E3 ubiquitin-protein ligase ARIH2 (492 aa).

Residues 1–11 (MSVDMNSQGSD) are compositionally biased toward polar residues. The disordered stretch occupies residues 1 to 37 (MSVDMNSQGSDSNEEDYDPNCEEEEEEEEDPGDIEDY). Residues 12–36 (SNEEDYDPNCEEEEEEEEDPGDIED) are compositionally biased toward acidic residues. A UBA-like region spans residues 64–111 (TYKESEGALHEHMTSLASVLKVSHSVAKLILVNFHWQVSEILDRYRSN). A TRIAD supradomain region spans residues 134–343 (PPHHCAVCMQ…SEYYECSRYK (210 aa)). Zn(2+) contacts are provided by Cys138, Cys141, Cys155, His157, Cys160, Cys163, Cys182, Cys187, Cys227, Cys232, Cys248, Cys251, Cys256, Cys259, His264, Cys269, Cys296, and Cys299. Residues 138 to 187 (CAVCMQFVRKENLLSLACQHQFCRSCWEQHCSVLVKDGVGVGISCMAQDC) form an RING-type 1 zinc finger. An IBR-type zinc finger spans residues 207 to 269 (DKYRRYLFRD…RQMYHAPTDC (63 aa)). The RING-type 2; atypical zinc-finger motif lies at 296–325 (CPKCNICIEKNGGCNHMQCSKCKHDFCWMC). Cys309 is an active-site residue. Zn(2+) is bound by residues Cys314, Cys317, Cys322, Cys325, His332, and Cys339. Ser352 carries the phosphoserine modification. An ariadne domain region spans residues 358–492 (REALKKYLFY…RTLLKDFHDT (135 aa)).

It belongs to the RBR family. Ariadne subfamily. In terms of assembly, interacts (via RING-type zinc finger 1) with UBE2L3. Interacts (via RING-type zinc finger 2) with UBE2N. Interacts with neddylated CUL5. Interacts (via RING-type 2) with GFI1B. Interacts with GFI1; prevents its ubiquitination and proteasomal degradation. Interacts with DCUN1D1 (via UBA-like domain); promotes DCUN1D1 ubiquitination. Post-translationally, ubiquitinated. Ubiquitination promotes proteasomal degradation.

The protein localises to the nucleus. The protein resides in the cytoplasm. It catalyses the reaction [E2 ubiquitin-conjugating enzyme]-S-ubiquitinyl-L-cysteine + [acceptor protein]-L-lysine = [E2 ubiquitin-conjugating enzyme]-L-cysteine + [acceptor protein]-N(6)-ubiquitinyl-L-lysine.. It participates in protein modification; protein ubiquitination. Autoinhibited by the ariadne domain, which masks the second RING-type zinc finger that contains the active site and inhibits the E3 activity. Inhibition is relieved upon binding to neddylated cullin-RING ubiquitin ligase complexes, which activate the E3 ligase activity of ARIH1. E3 ubiquitin-protein ligase, which catalyzes ubiquitination of target proteins together with ubiquitin-conjugating enzyme E2 UBE2L3. Acts as an atypical E3 ubiquitin-protein ligase by working together with cullin-5-RING ubiquitin ligase complex (ECS complex, also named CRL5 complex) and initiating ubiquitination of ECS substrates: associates with ECS complex and specifically mediates addition of the first ubiquitin on ECS targets. The initial ubiquitin is then elongated. E3 ubiquitin-protein ligase activity is activated upon binding to neddylated form of the ECS complex. Mediates 'Lys-6', 'Lys-48'- and 'Lys-63'-linked polyubiquitination. May play a role in myelopoiesis. This chain is E3 ubiquitin-protein ligase ARIH2 (Arih2), found in Mus musculus (Mouse).